A 213-amino-acid polypeptide reads, in one-letter code: Thymidylate kinase (213 aa).

10–17 (GLEGAGKT) provides a ligand contact to ATP.

The protein belongs to the thymidylate kinase family.

It catalyses the reaction dTMP + ATP = dTDP + ADP. Functionally, phosphorylation of dTMP to form dTDP in both de novo and salvage pathways of dTTP synthesis. The sequence is that of Thymidylate kinase from Escherichia coli O6:H1 (strain CFT073 / ATCC 700928 / UPEC).